We begin with the raw amino-acid sequence, 105 residues long: Small ribosomal subunit protein eS10A (105 aa).

Belongs to the eukaryotic ribosomal protein eS10 family. In terms of assembly, component of the small ribosomal subunit (SSU). Mature yeast ribosomes consist of a small (40S) and a large (60S) subunit. The 40S small subunit contains 1 molecule of ribosomal RNA (18S rRNA) and 33 different proteins (encoded by 57 genes). The large 60S subunit contains 3 rRNA molecules (25S, 5.8S and 5S rRNA) and 46 different proteins (encoded by 81 genes). eS10 interacts with GCN1 (via middle region); this interaction is direct and promotes GCN2 kinase activity. In terms of processing, the N-terminus is not modified.

Its subcellular location is the cytoplasm. In terms of biological role, component of the ribosome, a large ribonucleoprotein complex responsible for the synthesis of proteins in the cell. The small ribosomal subunit (SSU) binds messenger RNAs (mRNAs) and translates the encoded message by selecting cognate aminoacyl-transfer RNA (tRNA) molecules. The large subunit (LSU) contains the ribosomal catalytic site termed the peptidyl transferase center (PTC), which catalyzes the formation of peptide bonds, thereby polymerizing the amino acids delivered by tRNAs into a polypeptide chain. The nascent polypeptides leave the ribosome through a tunnel in the LSU and interact with protein factors that function in enzymatic processing, targeting, and the membrane insertion of nascent chains at the exit of the ribosomal tunnel. eS10 plays a role as a positive regulator of the GCN2 kinase activity by stimulating GCN1-mediated GCN2 activation. The protein is Small ribosomal subunit protein eS10A of Saccharomyces cerevisiae (strain ATCC 204508 / S288c) (Baker's yeast).